Reading from the N-terminus, the 156-residue chain is 6,7-dimethyl-8-ribityllumazine synthase (156 aa).

5-amino-6-(D-ribitylamino)uracil is bound by residues Phe-22, 57-59 (AYE), and 81-83 (TVI). 86 to 87 (GT) serves as a coordination point for (2S)-2-hydroxy-3-oxobutyl phosphate. Residue His-89 is the Proton donor of the active site. Phe-114 lines the 5-amino-6-(D-ribitylamino)uracil pocket. Residue Arg-128 coordinates (2S)-2-hydroxy-3-oxobutyl phosphate.

It belongs to the DMRL synthase family. Forms an icosahedral capsid composed of 60 subunits, arranged as a dodecamer of pentamers.

It catalyses the reaction (2S)-2-hydroxy-3-oxobutyl phosphate + 5-amino-6-(D-ribitylamino)uracil = 6,7-dimethyl-8-(1-D-ribityl)lumazine + phosphate + 2 H2O + H(+). It functions in the pathway cofactor biosynthesis; riboflavin biosynthesis; riboflavin from 2-hydroxy-3-oxobutyl phosphate and 5-amino-6-(D-ribitylamino)uracil: step 1/2. In terms of biological role, catalyzes the formation of 6,7-dimethyl-8-ribityllumazine by condensation of 5-amino-6-(D-ribitylamino)uracil with 3,4-dihydroxy-2-butanone 4-phosphate. This is the penultimate step in the biosynthesis of riboflavin. In Escherichia coli O45:K1 (strain S88 / ExPEC), this protein is 6,7-dimethyl-8-ribityllumazine synthase.